We begin with the raw amino-acid sequence, 216 residues long: FMN-dependent NADH:quinone oxidoreductase 2 (216 aa).

Residues serine 9, 15 to 17 (SVS), 96 to 99 (MYNF), and 140 to 143 (SRGG) each bind FMN.

This sequence belongs to the azoreductase type 1 family. Homodimer. FMN is required as a cofactor.

The catalysed reaction is 2 a quinone + NADH + H(+) = 2 a 1,4-benzosemiquinone + NAD(+). It carries out the reaction N,N-dimethyl-1,4-phenylenediamine + anthranilate + 2 NAD(+) = 2-(4-dimethylaminophenyl)diazenylbenzoate + 2 NADH + 2 H(+). In terms of biological role, quinone reductase that provides resistance to thiol-specific stress caused by electrophilic quinones. Functionally, also exhibits azoreductase activity. Catalyzes the reductive cleavage of the azo bond in aromatic azo compounds to the corresponding amines. This chain is FMN-dependent NADH:quinone oxidoreductase 2, found in Xanthomonas euvesicatoria pv. vesicatoria (strain 85-10) (Xanthomonas campestris pv. vesicatoria).